Consider the following 623-residue polypeptide: Chaperone protein DnaK (623 aa).

At T197 the chain carries Phosphothreonine; by autocatalysis. Residues 595–615 show a composition bias toward basic and acidic residues; the sequence is AENMYKKDEPNTANDKKKKDD. Residues 595 to 623 form a disordered region; it reads AENMYKKDEPNTANDKKKKDDDVIDAEVE.

The protein belongs to the heat shock protein 70 family.

Acts as a chaperone. This chain is Chaperone protein DnaK, found in Campylobacter jejuni subsp. doylei (strain ATCC BAA-1458 / RM4099 / 269.97).